We begin with the raw amino-acid sequence, 393 residues long: Methylthioribose kinase (393 aa).

Residues Asn38, Lys53, and 107 to 109 (EDL) contribute to the ATP site. Asp225 lines the substrate pocket. 242–244 (DPE) serves as a coordination point for ATP. Residue Arg332 coordinates substrate.

The protein belongs to the methylthioribose kinase family. As to quaternary structure, homodimer.

The enzyme catalyses 5-(methylsulfanyl)-D-ribose + ATP = 5-(methylsulfanyl)-alpha-D-ribose 1-phosphate + ADP + H(+). It participates in amino-acid biosynthesis; L-methionine biosynthesis via salvage pathway; S-methyl-5-thio-alpha-D-ribose 1-phosphate from S-methyl-5'-thioadenosine (hydrolase route): step 2/2. Functionally, catalyzes the phosphorylation of methylthioribose into methylthioribose-1-phosphate. The sequence is that of Methylthioribose kinase from Bacillus cereus (strain ATCC 14579 / DSM 31 / CCUG 7414 / JCM 2152 / NBRC 15305 / NCIMB 9373 / NCTC 2599 / NRRL B-3711).